The sequence spans 660 residues: tRNA 5-methylaminomethyl-2-thiouridine biosynthesis bifunctional protein MnmC (660 aa).

The interval 1-242 (MTDRIVPATL…KRAMLVGEFA (242 aa)) is tRNA (mnm(5)s(2)U34)-methyltransferase. Residues 266–660 (IGAGLAGCAV…VRALRHGRVA (395 aa)) are FAD-dependent cmnm(5)s(2)U34 oxidoreductase.

In the N-terminal section; belongs to the methyltransferase superfamily. tRNA (mnm(5)s(2)U34)-methyltransferase family. It in the C-terminal section; belongs to the DAO family. It depends on FAD as a cofactor.

The protein localises to the cytoplasm. The catalysed reaction is 5-aminomethyl-2-thiouridine(34) in tRNA + S-adenosyl-L-methionine = 5-methylaminomethyl-2-thiouridine(34) in tRNA + S-adenosyl-L-homocysteine + H(+). Functionally, catalyzes the last two steps in the biosynthesis of 5-methylaminomethyl-2-thiouridine (mnm(5)s(2)U) at the wobble position (U34) in tRNA. Catalyzes the FAD-dependent demodification of cmnm(5)s(2)U34 to nm(5)s(2)U34, followed by the transfer of a methyl group from S-adenosyl-L-methionine to nm(5)s(2)U34, to form mnm(5)s(2)U34. This chain is tRNA 5-methylaminomethyl-2-thiouridine biosynthesis bifunctional protein MnmC, found in Burkholderia pseudomallei (strain 1106a).